The chain runs to 197 residues: FMN-dependent NADH:quinone oxidoreductase (197 aa).

Ser-10 provides a ligand contact to FMN.

It belongs to the azoreductase type 1 family. In terms of assembly, homodimer. FMN is required as a cofactor.

It catalyses the reaction 2 a quinone + NADH + H(+) = 2 a 1,4-benzosemiquinone + NAD(+). The catalysed reaction is N,N-dimethyl-1,4-phenylenediamine + anthranilate + 2 NAD(+) = 2-(4-dimethylaminophenyl)diazenylbenzoate + 2 NADH + 2 H(+). Functionally, quinone reductase that provides resistance to thiol-specific stress caused by electrophilic quinones. Its function is as follows. Also exhibits azoreductase activity. Catalyzes the reductive cleavage of the azo bond in aromatic azo compounds to the corresponding amines. This Mycoplasma pneumoniae (strain ATCC 29342 / M129 / Subtype 1) (Mycoplasmoides pneumoniae) protein is FMN-dependent NADH:quinone oxidoreductase.